Consider the following 158-residue polypeptide: NADH-quinone oxidoreductase subunit B (158 aa).

Residues C37, C38, C102, and C132 each contribute to the [4Fe-4S] cluster site.

Belongs to the complex I 20 kDa subunit family. In terms of assembly, NDH-1 is composed of 14 different subunits. Subunits NuoB, C, D, E, F, and G constitute the peripheral sector of the complex. The cofactor is [4Fe-4S] cluster.

The protein resides in the cell inner membrane. It catalyses the reaction a quinone + NADH + 5 H(+)(in) = a quinol + NAD(+) + 4 H(+)(out). NDH-1 shuttles electrons from NADH, via FMN and iron-sulfur (Fe-S) centers, to quinones in the respiratory chain. Couples the redox reaction to proton translocation (for every two electrons transferred, four hydrogen ions are translocated across the cytoplasmic membrane), and thus conserves the redox energy in a proton gradient. The protein is NADH-quinone oxidoreductase subunit B of Legionella pneumophila (strain Corby).